The sequence spans 697 residues: Choline transporter-like protein 2 (697 aa).

The Cytoplasmic portion of the chain corresponds to 1–30 (MDMEEKPKYGEPRKFDPSFKGPIQNRGCTD). A helical transmembrane segment spans residues 31–51 (IVCCIIFIIAILGYLAVGILA). At 52-226 (WTHGDPRKVI…KIFEDYTKSW (175 aa)) the chain is on the extracellular side. 2 N-linked (GlcNAc...) asparagine glycosylation sites follow: asparagine 113 and asparagine 204. A helical transmembrane segment spans residues 227–247 (YWILICLLIAVVLSLIFIVLL). At 248–249 (RF) the chain is on the cytoplasmic side. The helical transmembrane segment at 250 to 270 (LAGVMVWVMILMVVAVIAYGI) threads the bilayer. Residues 271–309 (AHCSIKYVSLKDTPGSNITLQQLGFQPDFAVYLHIRQTW) are Extracellular-facing. N-linked (GlcNAc...) asparagine glycosylation occurs at asparagine 287. Residues 310-330 (LAFIIILAILELIIILLLIFL) traverse the membrane as a helical segment. Residues 331 to 353 (RNRIRVAVELMKEASRAIGYVMS) are Cytoplasmic-facing. Residues 354–374 (SLVFPIFTFFLLAIVIAFWGV) form a helical membrane-spanning segment. Over 375–435 (NAVFLSTSSE…YGGETPYHKY (61 aa)) the chain is Extracellular. Residues asparagine 391 and asparagine 406 are each glycosylated (N-linked (GlcNAc...) asparagine). A helical membrane pass occupies residues 436-456 (LILLQFYNVFLFFWCANFVTA). Over 457 to 498 (LGQMTLAGAFASYYWAFDKSKDMPAFPLCASLGRSLRYHTGS) the chain is Cytoplasmic. Residues 499–519 (LAFGSLLLAIVQVIRVLLEYI) traverse the membrane as a helical segment. Topologically, residues 520-593 (DHKLKGAENK…RVVVLDKVTD (74 aa)) are extracellular. A helical transmembrane segment spans residues 594 to 614 (FILFLGKLLIVGLVGIFAFFF). Over 615–632 (FSGQTDAFKGTAPSLHYY) the chain is Cytoplasmic. The helical transmembrane segment at 633–653 (WVPILTVLVCSYLIAHGFFSV) threads the bilayer. Over 654–697 (YAMCVDTLFLCFLEDLERNDGSAERPYLMSENLLNVLKKKNQAN) the chain is Extracellular.

It belongs to the CTL (choline transporter-like) family.

It localises to the cell membrane. Its subcellular location is the mitochondrion outer membrane. It carries out the reaction choline(out) + n H(+)(in) = choline(in) + n H(+)(out). It catalyses the reaction ethanolamine(out) + n H(+)(in) = ethanolamine(in) + n H(+)(out). Choline/H+ antiporter, mainly in mitochodria. Also acts as a low-affinity ethanolamine/H+ antiporter, regulating the supply of extracellular ethanolamine (Etn) for the CDP-Etn pathway, redistribute intracellular Etn and balance the CDP-Cho and CDP-Etn arms of the Kennedy pathway. In Danio rerio (Zebrafish), this protein is Choline transporter-like protein 2 (slc44a2).